A 78-amino-acid polypeptide reads, in one-letter code: Large ribosomal subunit protein bL28 (78 aa).

Residues 1–21 form a disordered region; it reads MSRVCQVTGKKPMVGNNRSHA.

It belongs to the bacterial ribosomal protein bL28 family.

The protein is Large ribosomal subunit protein bL28 of Shewanella loihica (strain ATCC BAA-1088 / PV-4).